The chain runs to 251 residues: MVKSHKRTLEKDEEHQEKKKANKISKDDMEIDAELLTQQASDSAHTDTATAAVAAVNNEQGKELEQTESSTNQTSALDKDDKETKDNLNPREETQSSHQEIDIPKDQLTNQQNLADQHQQYQYHQQLAQTNFKTEPTNSAKPPHGSEEWHRQRRENHKEVERKRRESINTGIRELARLIPTTDTNKAQILQRAVEYIKRLKENENNNIEKWTLEKLLTEQAVSELSASNEKLKHELESAYREIEQLKRGKK.

The interval 1–169 (MVKSHKRTLE…VERKRRESIN (169 aa)) is disordered. A compositionally biased stretch (basic and acidic residues) spans 7–28 (RTLEKDEEHQEKKKANKISKDD). A compositionally biased stretch (low complexity) spans 40–56 (ASDSAHTDTATAAVAAV). Over residues 67 to 76 (TESSTNQTSA) the composition is skewed to polar residues. The segment covering 77–105 (LDKDDKETKDNLNPREETQSSHQEIDIPK) has biased composition (basic and acidic residues). Polar residues predominate over residues 107 to 116 (QLTNQQNLAD). The span at 117-126 (QHQQYQYHQQ) shows a compositional bias: low complexity. The segment covering 127-140 (LAQTNFKTEPTNSA) has biased composition (polar residues). Over residues 144-167 (HGSEEWHRQRRENHKEVERKRRES) the composition is skewed to basic and acidic residues. Residues 152–200 (QRRENHKEVERKRRESINTGIRELARLIPTTDTNKAQILQRAVEYIKRL) form the bHLH domain. A coiled-coil region spans residues 190–223 (LQRAVEYIKRLKENENNNIEKWTLEKLLTEQAVS).

It localises to the nucleus. Its function is as follows. Transcription factor that binds ribosomal protein gene promoters and rDNA locus with TBF1. Necessary for the expression of genes involved in assimilation of inorganic sulfate. Also required for the expression of respiratory genes and glycolytic genes. Does not bind to centromeres and is not necessary for efficient chromosome segregationas as does S.cerevisiae CBF1. The chain is Transcriptional regulator CBF1 (CBF1) from Candida albicans (strain SC5314 / ATCC MYA-2876) (Yeast).